A 440-amino-acid chain; its full sequence is Cysteine proteinase (440 aa).

A signal peptide spans 1–60; it reads MYSSSVVSNPNERLVNNRVENDLESSDDTLSTQAKPVSRLLTRKLLLGVVVLFFLAGVSV. The propeptide at 61–229 is activation peptide; that stretch reads VSYFLFSKYK…DEDVDLAKLT (169 aa). The involved in processing to yield active enzymes stretch occupies residues 166 to 182; that stretch reads VKGINRFSDLTEREFYK. An N-linked (GlcNAc...) asparagine glycan is attached at N206. A disulfide bridge connects residues C250 and C291. Residues C253, H382, and N404 contribute to the active site.

The protein belongs to the peptidase C1 family.

In Theileria parva (East coast fever infection agent), this protein is Cysteine proteinase.